The primary structure comprises 155 residues: HTH-type transcriptional repressor MdtR (155 aa).

In terms of domain architecture, HTH marR-type spans 4–140 (ADQLMSDIQL…AAHITAKLAQ (137 aa)). A DNA-binding region (H-T-H motif) is located at residues 54-77 (VSEIAERMEVKPSAVTLMADRLEQ).

Homodimer.

It localises to the cytoplasm. The binding of MdtR to the mdtRP promoter region is severely inhibited by adding excess concentrations of fusidic acid or novobiocin but not by actinomycin or streptomycin. Its function is as follows. Repressor of the multidrug resistance operon mdtRP. Acts by binding directly to the mdtRP promoter region, leading to the repression of its expression. This Bacillus subtilis (strain 168) protein is HTH-type transcriptional repressor MdtR.